A 310-amino-acid polypeptide reads, in one-letter code: MQQNNSVPEFILLGLTQDPLRQKIVFVIFLIFYMGTVVGNMLIIVTIKSSRTLGSPMYFFLFYLSFADSCFSTSTAPRLIVDALSEKKIITYNECMTQVFALHLFGCMEIFVLILMAVDRYVAICKPLRYPTIMSQQVCIILIVLAWIGSLIHSTAQIILALRLPFCGPYLIDHYCCDLQPLLKLACMDTYMINLLLVSNSGAICSSSFMILIISYIVILHSLRNHSAKGKKKALSACTSHIIVVILFFGPCIFIYTRPPTTFPMDKMVAVFYTIGTPFLNPLIYTLRNAEVKNAMRKLWHGKIISENKG.

At 1–23 (MQQNNSVPEFILLGLTQDPLRQK) the chain is on the extracellular side. An N-linked (GlcNAc...) asparagine glycan is attached at N4. Residues 24 to 47 (IVFVIFLIFYMGTVVGNMLIIVTI) traverse the membrane as a helical segment. Over 48-55 (KSSRTLGS) the chain is Cytoplasmic. The helical transmembrane segment at 56–77 (PMYFFLFYLSFADSCFSTSTAP) threads the bilayer. The Extracellular portion of the chain corresponds to 78–98 (RLIVDALSEKKIITYNECMTQ). A disulfide bridge connects residues C95 and C187. Residues 99–118 (VFALHLFGCMEIFVLILMAV) traverse the membrane as a helical segment. Topologically, residues 119-137 (DRYVAICKPLRYPTIMSQQ) are cytoplasmic. A helical membrane pass occupies residues 138–156 (VCIILIVLAWIGSLIHSTA). Residues 157–193 (QIILALRLPFCGPYLIDHYCCDLQPLLKLACMDTYMI) lie on the Extracellular side of the membrane. Residues 194-217 (NLLLVSNSGAICSSSFMILIISYI) form a helical membrane-spanning segment. The Cytoplasmic segment spans residues 218 to 233 (VILHSLRNHSAKGKKK). The chain crosses the membrane as a helical span at residues 234 to 256 (ALSACTSHIIVVILFFGPCIFIY). At 257–267 (TRPPTTFPMDK) the chain is on the extracellular side. The chain crosses the membrane as a helical span at residues 268–287 (MVAVFYTIGTPFLNPLIYTL). At 288 to 310 (RNAEVKNAMRKLWHGKIISENKG) the chain is on the cytoplasmic side.

Belongs to the G-protein coupled receptor 1 family.

The protein resides in the cell membrane. In terms of biological role, odorant receptor. The chain is Olfactory receptor 4C11 (OR4C11) from Homo sapiens (Human).